We begin with the raw amino-acid sequence, 132 residues long: Small ribosomal subunit protein uS8 (132 aa).

This sequence belongs to the universal ribosomal protein uS8 family. As to quaternary structure, part of the 30S ribosomal subunit. Contacts proteins S5 and S12.

In terms of biological role, one of the primary rRNA binding proteins, it binds directly to 16S rRNA central domain where it helps coordinate assembly of the platform of the 30S subunit. The chain is Small ribosomal subunit protein uS8 from Lysinibacillus sphaericus (strain C3-41).